The primary structure comprises 530 residues: Ubiquitin carboxyl-terminal hydrolase 17-like protein 21 (530 aa).

One can recognise a USP domain in the interval 80-375 (AGLQNMGNTC…QAYVLFYIQK (296 aa)). Catalysis depends on Cys89, which acts as the Nucleophile. Catalysis depends on His334, which acts as the Proton acceptor. 2 stretches are compositionally biased toward basic and acidic residues: residues 382 to 392 (SESVSRGREPR) and 398 to 412 (DTDR…KRDH). Disordered regions lie at residues 382–412 (SESV…KRDH) and 477–530 (NHHP…LVCQ). The span at 493–505 (TPTHQESMNTGTL) shows a compositional bias: polar residues. Positions 510–524 (GRARRSKGKNKHSKR) are enriched in basic residues.

It belongs to the peptidase C19 family. USP17 subfamily.

It localises to the nucleus. The protein localises to the endoplasmic reticulum. It carries out the reaction Thiol-dependent hydrolysis of ester, thioester, amide, peptide and isopeptide bonds formed by the C-terminal Gly of ubiquitin (a 76-residue protein attached to proteins as an intracellular targeting signal).. Its function is as follows. Deubiquitinating enzyme that removes conjugated ubiquitin from specific proteins to regulate different cellular processes that may include cell proliferation, progression through the cell cycle, apoptosis, cell migration, and the cellular response to viral infection. This chain is Ubiquitin carboxyl-terminal hydrolase 17-like protein 21 (USP17L21), found in Homo sapiens (Human).